A 232-amino-acid chain; its full sequence is Ornithine carbamoyltransferase (232 aa).

Carbamoyl phosphate-binding positions include glutamine 15, arginine 39, and 66 to 69; that span reads HPTQ. L-ornithine is bound by residues asparagine 99, aspartate 163, and 167 to 168; that span reads SM. Carbamoyl phosphate is bound by residues 204–207 and threonine 232; that span reads HCLP.

This sequence belongs to the aspartate/ornithine carbamoyltransferase superfamily. OTCase family.

The protein localises to the cytoplasm. It catalyses the reaction carbamoyl phosphate + L-ornithine = L-citrulline + phosphate + H(+). The protein operates within amino-acid biosynthesis; L-arginine biosynthesis; L-arginine from L-ornithine and carbamoyl phosphate: step 1/3. Reversibly catalyzes the transfer of the carbamoyl group from carbamoyl phosphate (CP) to the N(epsilon) atom of ornithine (ORN) to produce L-citrulline. The chain is Ornithine carbamoyltransferase (argF) from Neisseria perflava.